A 354-amino-acid chain; its full sequence is Photosystem II protein D1 1 (354 aa).

The next 3 membrane-spanning stretches (helical) occupy residues tyrosine 29 to threonine 46, histidine 118 to leucine 133, and tryptophan 142 to alanine 156. Chlorophyll a is bound at residue histidine 118. Tyrosine 126 contributes to the pheophytin a binding site. [CaMn4O5] cluster-binding residues include aspartate 170 and glutamate 189. The helical transmembrane segment at phenylalanine 197 to leucine 218 threads the bilayer. Histidine 198 contacts chlorophyll a. A quinone contacts are provided by residues histidine 215 and serine 264–phenylalanine 265. Histidine 215 serves as a coordination point for Fe cation. Histidine 272 contacts Fe cation. The helical transmembrane segment at phenylalanine 274–leucine 288 threads the bilayer. [CaMn4O5] cluster-binding residues include histidine 332, glutamate 333, aspartate 342, and alanine 344. Residues alanine 345 to glycine 354 constitute a propeptide that is removed on maturation.

This sequence belongs to the reaction center PufL/M/PsbA/D family. PSII is composed of 1 copy each of membrane proteins PsbA, PsbB, PsbC, PsbD, PsbE, PsbF, PsbH, PsbI, PsbJ, PsbK, PsbL, PsbM, PsbT, PsbX, PsbY, PsbZ, Psb30/Ycf12, peripheral proteins PsbO, CyanoQ (PsbQ), PsbU, PsbV and a large number of cofactors. It forms dimeric complexes. The D1/D2 heterodimer binds P680, chlorophylls that are the primary electron donor of PSII, and subsequent electron acceptors. It shares a non-heme iron and each subunit binds pheophytin, quinone, additional chlorophylls, carotenoids and lipids. D1 provides most of the ligands for the Mn4-Ca-O5 cluster of the oxygen-evolving complex (OEC). There is also a Cl(-1) ion associated with D1 and D2, which is required for oxygen evolution. The PSII complex binds additional chlorophylls, carotenoids and specific lipids. is required as a cofactor. Tyr-161 forms a radical intermediate that is referred to as redox-active TyrZ, YZ or Y-Z. Post-translationally, C-terminally processed by CtpA; processing is essential to allow assembly of the oxygen-evolving complex and thus photosynthetic growth.

It localises to the cellular thylakoid membrane. It catalyses the reaction 2 a plastoquinone + 4 hnu + 2 H2O = 2 a plastoquinol + O2. Photosystem II (PSII) is a light-driven water:plastoquinone oxidoreductase that uses light energy to abstract electrons from H(2)O, generating O(2) and a proton gradient subsequently used for ATP formation. It consists of a core antenna complex that captures photons, and an electron transfer chain that converts photonic excitation into a charge separation. The D1/D2 (PsbA/PsbD) reaction center heterodimer binds P680, the primary electron donor of PSII as well as several subsequent electron acceptors. This chain is Photosystem II protein D1 1, found in Synechococcus sp. (strain JA-3-3Ab) (Cyanobacteria bacterium Yellowstone A-Prime).